The sequence spans 140 residues: Lymphocyte antigen 6L (140 aa).

The N-terminal stretch at 1–20 (MAPLLLVLWASLVSMELTGG) is a signal peptide. Residues 31–124 (LSCFECFKVL…GSWEGFWSLP (94 aa)) form the UPAR/Ly6 domain. Disulfide bonds link C33–C50 and C105–C110. S116 is lipidated: GPI-anchor amidated serine. A propeptide spans 117–140 (WEGFWSLPGRLLLPMGLGLFCTLL) (removed in mature form).

The protein resides in the cell membrane. This Mus musculus (Mouse) protein is Lymphocyte antigen 6L.